A 219-amino-acid chain; its full sequence is LHFPL tetraspan subfamily member 5 protein (219 aa).

Residues 1–24 (MVKLLPAQEAAKIYHTNYVRNSRA) lie on the Cytoplasmic side of the membrane. The chain crosses the membrane as a helical span at residues 25-45 (VGVMWGTLTICFSVLVMALFI). Residues 46-98 (QPYWIGDSVSTPQAGYFGLFSYCVGNVLSSELICKGGPLDFSSIPSRAFKTAM) lie on the Extracellular side of the membrane. The chain crosses the membrane as a helical span at residues 99 to 119 (FFVALAMFLIIGSIICFSLFF). Over 120-128 (VCNTATVYK) the chain is Cytoplasmic. The chain crosses the membrane as a helical span at residues 129–149 (ICAWMQLAAATGLMIGCLVYP). Residues 150–178 (DGWDSSEVRRMCGEQTGKYTLGHCTIRWA) lie on the Extracellular side of the membrane. Residues 179-199 (FMLAILSIGDALILSFLAFVL) traverse the membrane as a helical segment. Residues 200-219 (GYRQDKLLPDDYKADGNEEV) lie on the Cytoplasmic side of the membrane.

The protein belongs to the LHFP family. In terms of assembly, forms the MET channel composed of TMC (TMC1 or TMC2), TMIE, TOMT, CIB (CIB2 or CIB3), LHPL5 and PCDH15. Interaction with PCDH15 is required for efficient localization to hair bundles.

Its subcellular location is the cell membrane. In terms of biological role, auxiliary subunit of the mechanotransducer (MET) non-specific cation channel complex located at the tips of the shorter stereocilia of cochlear hair cells and that mediates sensory transduction in the auditory system. The MET complex is composed of two dimeric pore-forming ion-conducting transmembrane TMC (TMC1 or TMC2) subunits, and aided by several auxiliary proteins including LHFPL5, TMIE, CIB2/3 and TOMT, and the tip-link PCDH15. Functionally couples PCDH15 to the transduction channel. This chain is LHFPL tetraspan subfamily member 5 protein, found in Rattus norvegicus (Rat).